A 135-amino-acid polypeptide reads, in one-letter code: Protein PsiE homolog (135 aa).

A run of 4 helical transmembrane segments spans residues 13–33 (VLQW…VIFL), 54–74 (YMLV…ALIV), 82–102 (HFPL…LIIV), and 107–127 (PNDT…LYLA).

The protein belongs to the PsiE family.

It is found in the cell inner membrane. The sequence is that of Protein PsiE homolog from Edwardsiella ictaluri (strain 93-146).